We begin with the raw amino-acid sequence, 473 residues long: Photosystem II CP43 reaction center protein (473 aa).

Positions 1–14 (MKILYSLRRYFHVE) are excised as a propeptide. Residue threonine 15 is modified to N-acetylthreonine. Threonine 15 is subject to Phosphothreonine. 5 helical membrane passes run 69 to 93 (LFEV…PHLA), 134 to 155 (LIGP…KDKN), 178 to 200 (KAIW…RKIT), 255 to 275 (KPFA…LSYS), and 291 to 312 (WFNN…ASQA). Residue glutamate 367 coordinates [CaMn4O5] cluster. Residues 447–471 (RARAAAAGFEKGIDRDSEPVLYMEP) form a helical membrane-spanning segment.

It belongs to the PsbB/PsbC family. PsbC subfamily. In terms of assembly, PSII is composed of 1 copy each of membrane proteins PsbA, PsbB, PsbC, PsbD, PsbE, PsbF, PsbH, PsbI, PsbJ, PsbK, PsbL, PsbM, PsbT, PsbX, PsbY, PsbZ, Psb30/Ycf12, at least 3 peripheral proteins of the oxygen-evolving complex and a large number of cofactors. It forms dimeric complexes. Binds multiple chlorophylls and provides some of the ligands for the Ca-4Mn-5O cluster of the oxygen-evolving complex. It may also provide a ligand for a Cl- that is required for oxygen evolution. PSII binds additional chlorophylls, carotenoids and specific lipids. serves as cofactor.

The protein localises to the plastid. The protein resides in the chloroplast thylakoid membrane. Functionally, one of the components of the core complex of photosystem II (PSII). It binds chlorophyll and helps catalyze the primary light-induced photochemical processes of PSII. PSII is a light-driven water:plastoquinone oxidoreductase, using light energy to abstract electrons from H(2)O, generating O(2) and a proton gradient subsequently used for ATP formation. The chain is Photosystem II CP43 reaction center protein from Chara vulgaris (Common stonewort).